Here is a 275-residue protein sequence, read N- to C-terminus: Undecaprenyl-diphosphatase (275 aa).

The next 8 helical transmembrane spans lie at 4 to 24 (IYGL…EFLP), 54 to 74 (LGSI…LFGL), 92 to 112 (LHLY…LMFY), 123 to 143 (YVMY…LIHD), 154 to 174 (ISYL…LPGF), 194 to 214 (AFEF…ILDL), 228 to 248 (MFII…KLFW), and 255 to 275 (SFIP…LILI).

This sequence belongs to the UppP family.

It localises to the cell membrane. The catalysed reaction is di-trans,octa-cis-undecaprenyl diphosphate + H2O = di-trans,octa-cis-undecaprenyl phosphate + phosphate + H(+). Functionally, catalyzes the dephosphorylation of undecaprenyl diphosphate (UPP). Confers resistance to bacitracin. This is Undecaprenyl-diphosphatase from Baumannia cicadellinicola subsp. Homalodisca coagulata.